The chain runs to 356 residues: CMP-sialic acid transporter 2 (356 aa).

Basic and acidic residues predominate over residues 1 to 24; that stretch reads MEYRRVKDQESYDVVSQKDIESPG. A disordered region spans residues 1–44; it reads MEYRRVKDQESYDVVSQKDIESPGERSLSSTSATSSLSTAGASK. At 1–52 the chain is on the cytoplasmic side; that stretch reads MEYRRVKDQESYDVVSQKDIESPGERSLSSTSATSSLSTAGASKGKNSWKLK. Positions 27 to 44 are enriched in low complexity; the sequence is SLSSTSATSSLSTAGASK. A helical membrane pass occupies residues 53 to 73; it reads SIVTLALTLLTSSQAILIVWS. At 74–82 the chain is on the lumenal side; sequence KRAGKYEYS. Residues 83 to 103 traverse the membrane as a helical segment; the sequence is VTTANFSVEALKCLLSLIALY. Residues 104–125 are Cytoplasmic-facing; sequence RTWNSQGVTEDNRLSTSFDEVS. The chain crosses the membrane as a helical span at residues 126 to 146; it reads VYPIPAILYMVKNLLQYYIFA. The Lumenal segment spans residues 147–149; it reads YVD. The helical transmembrane segment at 150–172 threads the bilayer; sequence APAYQILKNLNIISTGVLYRIIL. The Cytoplasmic portion of the chain corresponds to 173 to 175; the sequence is KKK. The chain crosses the membrane as a helical span at residues 176–196; it reads LSEIQWAAFILLCAGCTTAQL. Topologically, residues 197–211 are lumenal; sequence NPSSDHVLQTPIQGW. Residues 212–232 form a helical membrane-spanning segment; sequence VMAIVMALLSGFAGVYTEAII. The Cytoplasmic portion of the chain corresponds to 233 to 239; that stretch reads KKRPSRN. Residues 240–260 traverse the membrane as a helical segment; sequence INVQNFWLYIFGMLFNLVAIC. The Lumenal segment spans residues 261 to 277; that stretch reads VQDFDAVMNKGFFHGYS. Residues 278-298 form a helical membrane-spanning segment; it reads FITVLMILNHALSGIAVSMVM. The Cytoplasmic portion of the chain corresponds to 299–314; the sequence is KYADNIVKVYSTSVAM. Residues 315–335 form a helical membrane-spanning segment; that stretch reads LLTAVVSVFLFGFHLSLAFFL. Topologically, residues 336–356 are lumenal; it reads GSTVVSVSVYLHSVGKPQPQK.

This sequence belongs to the nucleotide-sugar transporter family. CMP-Sialate:CMP antiporter (TC 2.A.7.12) subfamily. In terms of tissue distribution, expressed in roots, leaves and stalks.

The protein resides in the golgi apparatus membrane. Functionally, sugar transporter involved in the transport of CMP-sialic acid from the cytoplasm into the Golgi. May transport important nucleotide sugars such as CMP-Kdo (2-keto-3-deoxy-D-manno-octulosonic acid) in physiological conditions. The chain is CMP-sialic acid transporter 2 from Oryza sativa subsp. japonica (Rice).